Consider the following 806-residue polypeptide: Glycerol-3-phosphate acyltransferase (806 aa).

The short motif at 305–310 is the HXXXXD motif element; it reads CHRSHM.

The protein belongs to the GPAT/DAPAT family.

Its subcellular location is the cell inner membrane. The catalysed reaction is sn-glycerol 3-phosphate + an acyl-CoA = a 1-acyl-sn-glycero-3-phosphate + CoA. It participates in phospholipid metabolism; CDP-diacylglycerol biosynthesis; CDP-diacylglycerol from sn-glycerol 3-phosphate: step 1/3. The sequence is that of Glycerol-3-phosphate acyltransferase from Salmonella arizonae (strain ATCC BAA-731 / CDC346-86 / RSK2980).